The chain runs to 173 residues: Translation initiation factor IF-3 (173 aa).

Belongs to the IF-3 family. In terms of assembly, monomer.

The protein localises to the cytoplasm. Functionally, IF-3 binds to the 30S ribosomal subunit and shifts the equilibrium between 70S ribosomes and their 50S and 30S subunits in favor of the free subunits, thus enhancing the availability of 30S subunits on which protein synthesis initiation begins. The polypeptide is Translation initiation factor IF-3 (Methylobacterium sp. (strain 4-46)).